We begin with the raw amino-acid sequence, 375 residues long: Lipid droplet hydrolase 1 (375 aa).

An AB hydrolase-1 domain is found at 88 to 358 (VFVFVPGLAG…CSHNLCFDRP (271 aa)). The active-site Charge relay system is serine 177. A Microbody targeting signal motif is present at residues 373–375 (SKL).

Belongs to the AB hydrolase superfamily. Lipase family.

Its subcellular location is the lipid droplet. The catalysed reaction is a triacylglycerol + H2O = a diacylglycerol + a fatty acid + H(+). Serine hydrolase required for the maintenance of steady state level of non-polar and polar lipids of lipid droplets and thus plays a role in maintaining the lipids homeostasis. Exhibits both esterase and triacylglycerol lipase activity. The sequence is that of Lipid droplet hydrolase 1 from Saccharomyces cerevisiae (strain ATCC 204508 / S288c) (Baker's yeast).